The sequence spans 1370 residues: DNA-directed RNA polymerase subunit beta (1370 aa).

It belongs to the RNA polymerase beta chain family. As to quaternary structure, the RNAP catalytic core consists of 2 alpha, 1 beta, 1 beta' and 1 omega subunit. When a sigma factor is associated with the core the holoenzyme is formed, which can initiate transcription.

It carries out the reaction RNA(n) + a ribonucleoside 5'-triphosphate = RNA(n+1) + diphosphate. Functionally, DNA-dependent RNA polymerase catalyzes the transcription of DNA into RNA using the four ribonucleoside triphosphates as substrates. This is DNA-directed RNA polymerase subunit beta from Albidiferax ferrireducens (strain ATCC BAA-621 / DSM 15236 / T118) (Rhodoferax ferrireducens).